Reading from the N-terminus, the 204-residue chain is Proteasome subunit beta type-3 (204 aa).

The protein belongs to the peptidase T1B family. As to quaternary structure, the 26S proteasome consists of a 20S proteasome core and two 19S regulatory subunits. The 20S proteasome core is composed of 28 subunits that are arranged in four stacked rings, resulting in a barrel-shaped structure. The two end rings are each formed by seven alpha subunits, and the two central rings are each formed by seven beta subunits. The catalytic chamber with the active sites is on the inside of the barrel.

Its subcellular location is the cytoplasm. It localises to the nucleus. Non-catalytic component of the proteasome, a multicatalytic proteinase complex which is characterized by its ability to cleave peptides with Arg, Phe, Tyr, Leu, and Glu adjacent to the leaving group at neutral or slightly basic pH. The proteasome has an ATP-dependent proteolytic activity. This Oryza sativa subsp. japonica (Rice) protein is Proteasome subunit beta type-3 (PBC1).